Here is a 340-residue protein sequence, read N- to C-terminus: Myb-related protein Zm1 (340 aa).

HTH myb-type domains follow at residues 11–63 and 64–118; these read KVGL…INYL and RPDL…KKKV. 2 DNA-binding regions (H-T-H motif) span residues 39–63 and 91–114; these read WRALPKQAGLLRCGKSCRLRWINYL and WSKIAACLPGRTDNEIKNVWNTHL. Residues 116-126 show a composition bias toward basic residues; sequence KKVAQREKKKA. Disordered stretches follow at residues 116–173 and 190–209; these read KKVA…DATD and DGAPPAAQPMPSPSSSSSLT. The span at 133 to 166 shows a compositional bias: low complexity; it reads AGTPATAPLSSATSSTTTHNSSGGSDSGDQCGTS.

The protein localises to the nucleus. Transcription factor that positively regulates genes involved in anthocyanin biosynthesis such as A1. The protein is Myb-related protein Zm1 of Zea mays (Maize).